The sequence spans 122 residues: Large ribosomal subunit protein uL18 (122 aa).

The protein belongs to the universal ribosomal protein uL18 family. Part of the 50S ribosomal subunit; part of the 5S rRNA/L5/L18/L25 subcomplex. Contacts the 5S and 23S rRNAs.

In terms of biological role, this is one of the proteins that bind and probably mediate the attachment of the 5S RNA into the large ribosomal subunit, where it forms part of the central protuberance. The protein is Large ribosomal subunit protein uL18 of Acetivibrio thermocellus (strain ATCC 27405 / DSM 1237 / JCM 9322 / NBRC 103400 / NCIMB 10682 / NRRL B-4536 / VPI 7372) (Clostridium thermocellum).